The following is a 373-amino-acid chain: tRNA-specific 2-thiouridylase MnmA (373 aa).

ATP-binding positions include 12-19 (GMSGGVDS) and methionine 38. Residues 98–100 (NPD) are interaction with target base in tRNA. Cysteine 103 (nucleophile) is an active-site residue. A disulfide bond links cysteine 103 and cysteine 200. Position 127 (glycine 127) interacts with ATP. An interaction with tRNA region spans residues 150-152 (KDQ). The Cysteine persulfide intermediate role is filled by cysteine 200. The segment at 312–313 (RY) is interaction with tRNA.

This sequence belongs to the MnmA/TRMU family.

It is found in the cytoplasm. It catalyses the reaction S-sulfanyl-L-cysteinyl-[protein] + uridine(34) in tRNA + AH2 + ATP = 2-thiouridine(34) in tRNA + L-cysteinyl-[protein] + A + AMP + diphosphate + H(+). In terms of biological role, catalyzes the 2-thiolation of uridine at the wobble position (U34) of tRNA, leading to the formation of s(2)U34. The protein is tRNA-specific 2-thiouridylase MnmA of Streptococcus pneumoniae (strain JJA).